Consider the following 416-residue polypeptide: Serine hydroxymethyltransferase 1 (416 aa).

Residues leucine 121 and 125 to 127 (GHL) contribute to the (6S)-5,6,7,8-tetrahydrofolate site. The residue at position 229 (lysine 229) is an N6-(pyridoxal phosphate)lysine. (6S)-5,6,7,8-tetrahydrofolate contacts are provided by residues glutamate 245 and 354–356 (SPF).

This sequence belongs to the SHMT family. As to quaternary structure, homodimer. Pyridoxal 5'-phosphate is required as a cofactor.

Its subcellular location is the cytoplasm. The catalysed reaction is (6R)-5,10-methylene-5,6,7,8-tetrahydrofolate + glycine + H2O = (6S)-5,6,7,8-tetrahydrofolate + L-serine. The protein operates within one-carbon metabolism; tetrahydrofolate interconversion. It participates in amino-acid biosynthesis; glycine biosynthesis; glycine from L-serine: step 1/1. In terms of biological role, catalyzes the reversible interconversion of serine and glycine with tetrahydrofolate (THF) serving as the one-carbon carrier. This reaction serves as the major source of one-carbon groups required for the biosynthesis of purines, thymidylate, methionine, and other important biomolecules. Also exhibits THF-independent aldolase activity toward beta-hydroxyamino acids, producing glycine and aldehydes, via a retro-aldol mechanism. In Vibrio cholerae serotype O1 (strain ATCC 39315 / El Tor Inaba N16961), this protein is Serine hydroxymethyltransferase 1.